Consider the following 346-residue polypeptide: Porphobilinogen deaminase (346 aa).

C242 carries the post-translational modification S-(dipyrrolylmethanemethyl)cysteine. A disordered region spans residues 317-346 (ATEPGARSGTGAVRPPETDLSNPSPMENPQ). The span at 335–346 (DLSNPSPMENPQ) shows a compositional bias: polar residues.

Belongs to the HMBS family. In terms of assembly, monomer. Requires dipyrromethane as cofactor.

It carries out the reaction 4 porphobilinogen + H2O = hydroxymethylbilane + 4 NH4(+). It functions in the pathway porphyrin-containing compound metabolism; protoporphyrin-IX biosynthesis; coproporphyrinogen-III from 5-aminolevulinate: step 2/4. In terms of biological role, tetrapolymerization of the monopyrrole PBG into the hydroxymethylbilane pre-uroporphyrinogen in several discrete steps. This chain is Porphobilinogen deaminase, found in Nocardia farcinica (strain IFM 10152).